The sequence spans 569 residues: Urease subunit alpha (569 aa).

The region spanning 131-569 (GSIDTHIHFI…VPMAQRYFLL (439 aa)) is the Urease domain. Ni(2+) is bound by residues His-136, His-138, and Lys-219. At Lys-219 the chain carries N6-carboxylysine. His-221 serves as a coordination point for substrate. His-248 and His-274 together coordinate Ni(2+). Residue His-322 is the Proton donor of the active site. Residue Asp-362 coordinates Ni(2+).

Belongs to the metallo-dependent hydrolases superfamily. Urease alpha subunit family. In terms of assembly, heterotrimer of UreA (gamma), UreB (beta) and UreC (alpha) subunits. Three heterotrimers associate to form the active enzyme. Ni cation serves as cofactor. In terms of processing, carboxylation allows a single lysine to coordinate two nickel ions.

Its subcellular location is the cytoplasm. The enzyme catalyses urea + 2 H2O + H(+) = hydrogencarbonate + 2 NH4(+). It participates in nitrogen metabolism; urea degradation; CO(2) and NH(3) from urea (urease route): step 1/1. In Prochlorococcus marinus (strain MIT 9215), this protein is Urease subunit alpha.